A 307-amino-acid polypeptide reads, in one-letter code: Putative S-adenosyl-L-methionine-dependent methyltransferase Mflv_5023 (307 aa).

S-adenosyl-L-methionine is bound by residues Asp-133 and 162–163 (DL). A disordered region spans residues 213–234 (SRLAVESVPSQQSADQDEMREK).

Belongs to the UPF0677 family.

Exhibits S-adenosyl-L-methionine-dependent methyltransferase activity. In Mycolicibacterium gilvum (strain PYR-GCK) (Mycobacterium gilvum (strain PYR-GCK)), this protein is Putative S-adenosyl-L-methionine-dependent methyltransferase Mflv_5023.